A 246-amino-acid chain; its full sequence is Anionic trypsin-2 (246 aa).

A signal peptide spans 1–15; it reads MSALLILALVGAAVA. The propeptide at 16–23 is activation peptide; sequence FPVDDDDK. The region spanning 24-244 is the Peptidase S1 domain; it reads IVGGYTCRES…YVDWIQNTIA (221 aa). 6 cysteine pairs are disulfide-bonded: C30/C160, C48/C64, C132/C233, C139/C206, C171/C185, and C196/C220. Residue H63 is the Charge relay system of the active site. Positions 75, 77, 80, and 85 each coordinate Ca(2+). D107 functions as the Charge relay system in the catalytic mechanism. Residue S200 is the Charge relay system of the active site.

It belongs to the peptidase S1 family. The cofactor is Ca(2+). Expressed in the pancreas, lung and kidney.

Its subcellular location is the secreted. It localises to the extracellular space. The catalysed reaction is Preferential cleavage: Arg-|-Xaa, Lys-|-Xaa.. The polypeptide is Anionic trypsin-2 (Prss2) (Mus musculus (Mouse)).